The following is a 332-amino-acid chain: D-galactose/methyl-galactoside binding periplasmic protein MglB (332 aa).

Positions 1 to 23 (MNKKVLTLSAVMASLLFGAHAHA) are cleaved as a signal peptide. Positions 37 and 114 each coordinate beta-D-galactose. Asp-37 and Asn-114 together coordinate beta-D-glucose. Positions 157, 159, 161, 163, and 165 each coordinate Ca(2+). Beta-D-galactose is bound by residues His-175, Asp-177, and Arg-181. Positions 175, 177, and 181 each coordinate beta-D-glucose. Glu-228 serves as a coordination point for Ca(2+). Positions 234, 259, and 279 each coordinate beta-D-galactose. Beta-D-glucose-binding residues include Asn-234, Asp-259, and Asn-279.

It belongs to the bacterial solute-binding protein 2 family. The ABC transporter complex is composed of one ATP-binding protein (MglA), two transmembrane proteins (MglC) and a solute-binding protein (MglB).

The protein localises to the periplasm. Its function is as follows. Part of the ABC transporter complex MglABC involved in galactose/methyl galactoside import. In addition, binds D-galactose and D-glucose and plays a role in the chemotaxis towards these two sugars by interacting with the Trg chemoreceptor. In Salmonella typhimurium (strain LT2 / SGSC1412 / ATCC 700720), this protein is D-galactose/methyl-galactoside binding periplasmic protein MglB (mglB).